The sequence spans 311 residues: Probable cell division protein WhiA (311 aa).

A DNA-binding region (H-T-H motif) is located at residues 277–311 (TLKEVADQIPDGPISKSGVNHRFKKLHELAETLKE).

It belongs to the WhiA family.

Its function is as follows. Involved in cell division and chromosome segregation. This Lactobacillus helveticus (strain DPC 4571) protein is Probable cell division protein WhiA.